A 403-amino-acid chain; its full sequence is Protein STRICTOSIDINE SYNTHASE-LIKE 13 (403 aa).

The first 42 residues, 1–42, serve as a signal peptide directing secretion; the sequence is MEKKGQHGTYESMMTHHPILCIIALSVLFIAIDPFHMSPIGG. Asn-66 and Asn-206 each carry an N-linked (GlcNAc...) asparagine glycan.

This sequence belongs to the strictosidine synthase family.

The protein localises to the vacuole. Required for the exine formation during pollen development. The polypeptide is Protein STRICTOSIDINE SYNTHASE-LIKE 13 (Arabidopsis thaliana (Mouse-ear cress)).